A 186-amino-acid chain; its full sequence is Transcription factor HES-3 (186 aa).

The 49-residue stretch at 1-49 (MEKKRRARINVSLEQLKSLLEKHYSHQIRKRKLEKADILELSVKYMRSL) folds into the bHLH domain. One can recognise an Orange domain in the interval 65 to 99 (QPSGFRSCLPGVSQLLRRGDEVGSGLRCPLVPESA). Residues 128–186 (APAAGGPRSPPPLLLLPESLPGSSASVPPPQPASSRCAESPGLGLRVWRPWGSPGDDLN) form a disordered region. The segment covering 142 to 153 (LLPESLPGSSAS) has biased composition (low complexity). The WRPW motif motif lies at 175–178 (WRPW).

As to quaternary structure, transcription repression requires formation of a complex with a corepressor protein of the Groucho/TLE family.

Its subcellular location is the nucleus. In terms of biological role, transcriptional repressor of genes that require a bHLH protein for their transcription. This is Transcription factor HES-3 (HES3) from Homo sapiens (Human).